The sequence spans 182 residues: Homeobox expressed in ES cells 1-A (182 aa).

The homeobox DNA-binding region spans 103 to 163; it reads YRGRRPRTAF…QNRRAKLKRS (61 aa).

It belongs to the ANF homeobox family. As to expression, initially expressed in the anterior dorsal region of early embryos and later exclusively in the primordium of the anterior pituitary gland.

It is found in the nucleus. Functionally, appears to be involved in the regional specification of the anterior head of Xenopus embryos. The polypeptide is Homeobox expressed in ES cells 1-A (hesx1-a) (Xenopus laevis (African clawed frog)).